A 400-amino-acid chain; its full sequence is Transposase for insertion sequence element ISRM3 (400 aa).

It belongs to the transposase mutator family.

In terms of biological role, required for the transposition of the insertion element. The polypeptide is Transposase for insertion sequence element ISRM3 (Rhizobium meliloti (strain 1021) (Ensifer meliloti)).